A 213-amino-acid chain; its full sequence is uncharacterized protein (213 aa).

Residues 1 to 11 show a composition bias toward basic and acidic residues; the sequence is MFATKDPEFEN. Disordered stretches follow at residues 1–21 and 63–98; these read MFAT…SPRN and LRNK…EQAW. Residues 12-21 show a composition bias toward polar residues; the sequence is RINTNKSPRN. Residues 63–93 show a composition bias toward basic and acidic residues; sequence LRNKAPKNEETKHEEHTPDNHEETDHHEAKQ.

This is an uncharacterized protein from Escherichia coli (strain K12).